The following is a 181-amino-acid chain: S-fimbrial protein subunit SfaA (181 aa).

Residues 1-24 (MKLKFISMAVFSALTLGVATNASA) form the signal peptide. Cysteines 44 and 84 form a disulfide.

It belongs to the fimbrial protein family.

The protein localises to the fimbrium. In terms of biological role, fimbriae (also called pili), polar filaments radiating from the surface of the bacterium to a length of 0.5-1.5 micrometers and numbering 100-300 per cell, enable bacteria to colonize the epithelium of specific host organs. Its function is as follows. The major fimbrial subunit. Interacts with alpha-sialic acid-(2-3)-beta-Gal containing receptors. It belongs to the group of Mrh (Mannose-resistant hemagglutination) fimbrial proteins. This chain is S-fimbrial protein subunit SfaA (sfaA), found in Escherichia coli O6:K15:H31 (strain 536 / UPEC).